Reading from the N-terminus, the 185-residue chain is Photosystem I assembly protein Ycf4 (185 aa).

A run of 2 helical transmembrane segments spans residues 24–44 (YIIG…SISS) and 66–86 (IIMG…WYLV).

The protein belongs to the Ycf4 family.

The protein localises to the cellular thylakoid membrane. Its function is as follows. Seems to be required for the assembly of the photosystem I complex. This Prochlorococcus marinus (strain MIT 9301) protein is Photosystem I assembly protein Ycf4.